Here is a 402-residue protein sequence, read N- to C-terminus: MMVALPGASASLVLFLAAFLPPLQHAQDPAMVHYIYQRFQVLEQGLEKCAQTTRAYIQDFQEFSKNLSTMLGRCQTHTNEYRSAVDNLALRVERAQREIDYLQYLRESDFCVESEEKTSAEKVLQEAEEEKKIRTLLNTSCDNMLMAIKSLKIVKKTVDPEGSWMKDAGSTSAKVYLLAGSRNNTVWEFANLRAFMEDSVKPGPRKLTLPLSWQGSGQVVYQSFLFFHNQGTSNEIIKYNLQKKTVEDRMLLPGGAGRAPIYQHSLSTYIDLAVDEHGLWAIHSGPGIQGHLVLTKIEAGTLGIEHSWDTPCRSQDAEASFLLCGVLYVVYSSGGQGPHRITCVYDPLGTVREEHLPNLFFPRRARSHSMIHYNPRDKQLYAWNEGYQIIYKLQTKKKLPLE.

The signal sequence occupies residues 1 to 28 (MMVALPGASASLVLFLAAFLPPLQHAQD). N-linked (GlcNAc...) asparagine glycosylation is present at Asn-66. Positions 73–135 (RCQTHTNEYR…EAEEEKKIRT (63 aa)) form a coiled coil. Residues Asn-138 and Asn-183 are each glycosylated (N-linked (GlcNAc...) asparagine). The Olfactomedin-like domain maps to 140–397 (SCDNMLMAIK…QIIYKLQTKK (258 aa)). The cysteines at positions 141 and 324 are disulfide-linked.

In terms of processing, highly N-glycosylated.

The protein resides in the secreted. The polypeptide is Olfactomedin-like protein 1 (Olfml1) (Rattus norvegicus (Rat)).